A 74-amino-acid chain; its full sequence is Conotoxin VnMEKL-0222 (74 aa).

The signal sequence occupies residues 1–19; the sequence is MEKLTILLLVAAVLMSTQA. Residues 20–46 constitute a propeptide that is removed on maturation; the sequence is LIQEKRPKEKIKFLSKRKSIPESWWEG. 3 disulfide bridges follow: cysteine 48–cysteine 62, cysteine 55–cysteine 66, and cysteine 61–cysteine 71.

This sequence belongs to the conotoxin O2 superfamily. As to expression, expressed by the venom duct.

It localises to the secreted. This Conus ventricosus (Mediterranean cone) protein is Conotoxin VnMEKL-0222.